The chain runs to 212 residues: ER lumen protein-retaining receptor 2 (212 aa).

Residues Met-1 to Phe-4 are Lumenal-facing. Residues Arg-5 to Trp-24 form a helical membrane-spanning segment. The Cytoplasmic portion of the chain corresponds to Lys-25–Ile-32. The helical transmembrane segment at Ser-33–Leu-52 threads the bilayer. The interval Arg-47–Tyr-48 is interaction with the K-D-E-L motif on target proteins. Residues Thr-53–Leu-58 are Lumenal-facing. The helical transmembrane segment at Tyr-59–Tyr-79 threads the bilayer. Topologically, residues Ala-80–Thr-92 are cytoplasmic. The helical transmembrane segment at Phe-93–Asn-110 threads the bilayer. The Lumenal portion of the chain corresponds to His-111–Leu-116. Residues Glu-117–Leu-135 traverse the membrane as a helical segment. Residues Phe-136–Thr-149 are Cytoplasmic-facing. Residues His-150–Trp-168 form a helical membrane-spanning segment. An interaction with the K-D-E-L motif on target proteins region spans residues Arg-159–Arg-169. At Arg-169–Met-178 the chain is on the lumenal side. The chain crosses the membrane as a helical span at residues Ile-179–Val-199. The Cytoplasmic segment spans residues Thr-200–Ala-212. Residues Lys-204–Lys-207 form an important for recycling of cargo proteins with the sequence motif K-D-E-L from the Golgi to the endoplasmic reticulum region.

The protein belongs to the ERD2 family.

It is found in the endoplasmic reticulum membrane. Its subcellular location is the golgi apparatus membrane. The protein localises to the cytoplasmic vesicle. It localises to the COPI-coated vesicle membrane. Functionally, receptor for the C-terminal sequence motif K-D-E-L that is present on endoplasmic reticulum resident proteins and that mediates their recycling from the Golgi back to the endoplasmic reticulum. Binding is pH dependent, and is optimal at pH 5-5.4. This is ER lumen protein-retaining receptor 2 (kdelr2) from Danio rerio (Zebrafish).